The primary structure comprises 88 residues: uncharacterized protein (88 aa).

3 consecutive transmembrane segments (helical) span residues 3–23 (VFILFYLWIVPIVIGILCSVA), 33–53 (VAPGIAMIVLSIISLITAFTA), and 61–81 (FIGGMFLFGTFLVGSAFPFFF).

The protein resides in the cell membrane. This is an uncharacterized protein from Bacillus subtilis (strain 168).